We begin with the raw amino-acid sequence, 325 residues long: Elongation factor P--(R)-beta-lysine ligase (325 aa).

Substrate is bound at residue 76–78 (SPE). ATP is bound by residues 100-102 (RNE) and asparagine 109. Tyrosine 118 is a binding site for substrate. 244-245 (EL) lines the ATP pocket. Substrate is bound at residue glutamate 251. Glycine 300 contributes to the ATP binding site.

It belongs to the class-II aminoacyl-tRNA synthetase family. EpmA subfamily. In terms of assembly, homodimer.

The enzyme catalyses D-beta-lysine + L-lysyl-[protein] + ATP = N(6)-((3R)-3,6-diaminohexanoyl)-L-lysyl-[protein] + AMP + diphosphate + H(+). Its function is as follows. With EpmB is involved in the beta-lysylation step of the post-translational modification of translation elongation factor P (EF-P). Catalyzes the ATP-dependent activation of (R)-beta-lysine produced by EpmB, forming a lysyl-adenylate, from which the beta-lysyl moiety is then transferred to the epsilon-amino group of a conserved specific lysine residue in EF-P. The chain is Elongation factor P--(R)-beta-lysine ligase from Hamiltonella defensa subsp. Acyrthosiphon pisum (strain 5AT).